The chain runs to 361 residues: Peptide chain release factor 1 (361 aa).

Residue Q235 is modified to N5-methylglutamine. The interval R283–R306 is disordered.

It belongs to the prokaryotic/mitochondrial release factor family. In terms of processing, methylated by PrmC. Methylation increases the termination efficiency of RF1.

The protein resides in the cytoplasm. Its function is as follows. Peptide chain release factor 1 directs the termination of translation in response to the peptide chain termination codons UAG and UAA. The polypeptide is Peptide chain release factor 1 (Xylella fastidiosa (strain M23)).